Consider the following 1663-residue polypeptide: Cortactin-binding protein 2 (1663 aa).

Disordered regions lie at residues methionine 1–alanine 23, lysine 203–glutamate 222, arginine 358–glycine 440, and glycine 454–arginine 479. Residues lysine 119–lysine 276 adopt a coiled-coil conformation. Low complexity predominate over residues proline 386–serine 396. A compositionally biased stretch (polar residues) spans glutamine 411–alanine 422. Asymmetric dimethylarginine is present on arginine 498. The tract at residues phenylalanine 499–serine 616 is disordered. Over residues threonine 583 to glutamine 593 the composition is skewed to polar residues. ANK repeat units lie at residues glycine 709–tyrosine 739, aspartate 743–alanine 772, asparagine 776–histidine 805, glycine 809–valine 838, aspartate 842–glycine 871, and glutamate 912–arginine 942. The interval asparagine 1446–proline 1477 is disordered. Serine 1524 carries the phosphoserine modification. Disordered regions lie at residues serine 1580–threonine 1602 and serine 1618–lysine 1663. Positions lysine 1582–lysine 1599 are enriched in polar residues. The segment covering serine 1624–glutamine 1638 has biased composition (low complexity). The span at serine 1645 to lysine 1663 shows a compositional bias: basic and acidic residues.

In terms of assembly, interacts with CTTN/cortactin SH3 domain. Interacts with STRN, STRN4/zinedin and MOB4/phocein; this interactions mediate the association with the STRIPAK core complex and may regulate dendritic spine distribution of the STRIPAK complex in hippocampal neurons. Activation of glutamate receptors weakens the interaction with STRN and STRN4.

It localises to the cytoplasm. The protein localises to the cell cortex. The protein resides in the cell projection. It is found in the dendritic spine. In terms of biological role, regulates the dendritic spine distribution of CTTN/cortactin in hippocampal neurons, and thus controls dendritic spinogenesis and dendritic spine maintenance. Associates with the striatin-interacting phosphatase and kinase (STRIPAK) core complex to regulate dendritic spine distribution of the STRIPAK complex in hippocampal neurons. This chain is Cortactin-binding protein 2 (CTTNBP2), found in Colobus guereza (Mantled guereza).